We begin with the raw amino-acid sequence, 383 residues long: Cytochrome b (383 aa).

4 consecutive transmembrane segments (helical) span residues 32–52 (FGSL…FLAM), 76–98 (WLIR…CHIA), 113–133 (TWSI…LGYV), and 179–199 (FFSL…AHMI). Residues histidine 82 and histidine 96 each coordinate heme b. Heme b-binding residues include histidine 183 and histidine 197. An a ubiquinone-binding site is contributed by histidine 202. 4 helical membrane passes run 225–245 (FIFK…IFVC), 289–309 (LLGV…PLTD), 321–341 (LMKL…WIGA), and 348–368 (YLEV…FIVP).

It belongs to the cytochrome b family. Fungal cytochrome b-c1 complex contains 10 subunits; 3 respiratory subunits, 2 core proteins and 5 low-molecular weight proteins. Cytochrome b-c1 complex is a homodimer. The cofactor is heme b.

The protein localises to the mitochondrion inner membrane. Component of the ubiquinol-cytochrome c reductase complex (complex III or cytochrome b-c1 complex) that is part of the mitochondrial respiratory chain. The b-c1 complex mediates electron transfer from ubiquinol to cytochrome c. Contributes to the generation of a proton gradient across the mitochondrial membrane that is then used for ATP synthesis. The polypeptide is Cytochrome b (cob) (Schizophyllum commune (Split gill fungus)).